We begin with the raw amino-acid sequence, 131 residues long: MSWQTYVDEHLMCDIEGHQLGSAAILGHAGTVWAQSTAFPQFKPEEIAAIMKDFDEPGHLAPTGMFVATAKYMVIAGEPGAVIRGKKGSGGITIKKTGQALVVGIYDEPMTPGQCNMVVERLGDYLLEQGL.

The cysteines at positions 13 and 115 are disulfide-linked. An Involved in PIP2 interaction motif is present at residues 81–97 (AVIRGKKGSGGITIKKT). Thr111 is modified (phosphothreonine).

Belongs to the profilin family. As to quaternary structure, occurs in many kinds of cells as a complex with monomeric actin in a 1:1 ratio. Phosphorylated by MAP kinases.

It localises to the cytoplasm. The protein localises to the cytoskeleton. Its function is as follows. Binds to actin and affects the structure of the cytoskeleton. At high concentrations, profilin prevents the polymerization of actin, whereas it enhances it at low concentrations. This Olea europaea (Common olive) protein is Profilin-3.